A 437-amino-acid polypeptide reads, in one-letter code: MTMSLIQACRSLALSTWLLSFCFVHLLCLDFTVAEKEEWYTAFVNITYLEPEPGAAVAGSGGGAELHTEKSECGRYGEHSPKQDARGEVVMASSAQDRLACDPNTKFAAPAHGKHWIALIPKGNCTYRDKIRNAFLQNASAVVIFNVGSNTNETITMPHAGVEDIVAIMIPEPKGKEIVSLLERNITVTMYITIGTRNLQKYVSRTSVVFVSISFIVLMIISLAWLVFYYIQRFRYANARDRNQRRLGDAAKKAISKLQVRTIRKGDKETESDFDNCAVCIEGYKPNDVVRILPCRHLFHKSCVDPWLLDHRTCPMCKMNILKALGIPPNADCMDDLPIDFEGSLGGPPTNQITGASDTTVNESSVTLDPAVRTVGALQVVQDPDPAPQEGEAIFTTNSGQEPALSSDSDISLIMALEVGLSDVELSTDQDCEEVKS.

The signal sequence occupies residues 1 to 34; that stretch reads MTMSLIQACRSLALSTWLLSFCFVHLLCLDFTVA. Residues 35–207 are Extracellular-facing; that stretch reads EKEEWYTAFV…NLQKYVSRTS (173 aa). N-linked (GlcNAc...) asparagine glycans are attached at residues N45, N124, N152, and N185. One can recognise a PA domain in the interval 80-182; the sequence is SPKQDARGEV…PKGKEIVSLL (103 aa). The chain crosses the membrane as a helical span at residues 208–228; that stretch reads VVFVSISFIVLMIISLAWLVF. At 229–437 the chain is on the cytoplasmic side; that stretch reads YYIQRFRYAN…TDQDCEEVKS (209 aa). The RING-type; atypical zinc-finger motif lies at 277 to 318; sequence CAVCIEGYKPNDVVRILPCRHLFHKSCVDPWLLDHRTCPMCK.

It localises to the membrane. The sequence is that of RING finger protein 150 (Rnf150) from Mus musculus (Mouse).